The chain runs to 133 residues: Large ribosomal subunit protein uL15 (133 aa).

Residues 1–57 (MALEKLTPAAGSTHATKRIGRGQGSGNGKTAGKGNKGQRARKGYNEKRGFEGGQQPL) are disordered. Residues 21–35 (RGQGSGNGKTAGKGN) are compositionally biased toward gly residues.

The protein belongs to the universal ribosomal protein uL15 family. As to quaternary structure, part of the 50S ribosomal subunit.

Its function is as follows. Binds to the 23S rRNA. This chain is Large ribosomal subunit protein uL15, found in Campylobacter concisus (strain 13826).